A 698-amino-acid polypeptide reads, in one-letter code: MMELITELFDEDTTLPITNLNPKKKIPQIFSVHVDDAIEQPGFRLCTYTSGGDTNRDLKMGDKMMHIVPFTLTAKGSIAKLKGLGPSPINYINSVFTVAMQTMRQYKIDACMLRILKSKTAGQARQIQVIADRLIRSRSGGRYVLLKELWDYDKKYAYILIHRKNVSLEDIPGVPEISTELFTKVESKVGDVYINKDTGAQVTKNEAIAASIAQENDKRTDQAVIVKVKISRRAIAQSQSLESSRFESELFQKYESTAANFNKPATAPLIPEAEEMKIGINSLASKTKAAKIIAEGTANELHYDYKFFSKSEVDEVSEKIKDVIFNAIKNEPTTSIKCLEKYAAAVNQFFEEYKDNWLDKHNKTRKGQPDEVWGEITKNAWNAAKTKFLKRMIYSFSGIGAGPMIDITIACDGSKYTPSQKRGIREYCGSGYTDINNLLLGRYNPERYDVMSEKEIESAINNLDSAFENGDRIPEGITVYRAQSMTAPIYEALVKNKVFYFRNFVSTSLTPIIFGRFGITHAGIGLLEPEARNELTVDKNEEGITINPNEIRAYKENPEYVKVQIGWAIDGAHKVNVVYPGSLGIATEAEVILPRGLMVKVNKITDASNNDGTTSNNTKLIQAEVMTTEELTESVIYDGDRLMETGEVVAMTGDIEIEDRVDFASFVSSNVKQKVESSLGIIASCIDITNMPYKFVQG.

Residues 375–628 (EITKNAWNAA…KLIQAEVMTT (254 aa)) form the TR mART core domain. Catalysis depends on residues Arg-481, Ser-506, and Glu-590.

It belongs to the Tevenvirinae NAD(+)--arginine ADP-ribosyltransferase family. Proteolytic cleavages at the N- and C-termini by the prohead core protein protease give rise to the mature enzyme.

It localises to the virion. It carries out the reaction L-arginyl-[protein] + NAD(+) = N(omega)-(ADP-D-ribosyl)-L-arginyl-[protein] + nicotinamide + H(+). In terms of biological role, ADP-ribosyltransferase that efficiently ADP-ribosylates one of the two alpha subunits of host RNA polymerase RPOA on an arginine located in the C-terminal region. ADP-ribosylation of RPOA alpha subunit enhances the transcription of viral early genes. Also ribosylates RPOA subunits beta, beta' and sigma 70 and performs an autoribosylation reaction. This Escherichia coli (Bacteriophage T2) protein is NAD(+)--arginine ADP-ribosyltransferase (alt).